Here is a 212-residue protein sequence, read N- to C-terminus: Thymidylate kinase (212 aa).

G15 to S22 provides a ligand contact to ATP.

It belongs to the thymidylate kinase family.

The enzyme catalyses dTMP + ATP = dTDP + ADP. Phosphorylation of dTMP to form dTDP in both de novo and salvage pathways of dTTP synthesis. The sequence is that of Thymidylate kinase from Chromobacterium violaceum (strain ATCC 12472 / DSM 30191 / JCM 1249 / CCUG 213 / NBRC 12614 / NCIMB 9131 / NCTC 9757 / MK).